Reading from the N-terminus, the 1465-residue chain is MSDLFAKLMDQIEMPLDMRRSSAFSSADIIEVKVHSVSRLWEFHFAFAAVLPIATYRELHDRLIRTFEAADIKVTFDIQAAQVDYSDDLLQAYYQEAFEHAPCNSASFKSSFSKLKVTYEDDKLIIAAPRFVNNDHFRNNHLPNLVKQFEAFGFGTLTIDMVSDQEMTEHLTKDFVSSRQALVKKAVQDNLEAQKSLEAMMPPVEEATPAPKFDYKERAAKRQAGFEKATITPMIEIETEENRIVFEGMVFDVERKTTRTGRHIINFKMTDYTSSFALQKWAKDDEELRKFDMIAKGAWLRVQGNIETNPFTKSLTMNVQQVKEIVHHDRKDLMPEGQKRVELHAHTNMSTMDALPTVESLIDTAAKWGHKAVAITDHANVQSFPHGYHRARKAGIKAIFGLEANIVEDKVPISYDPVDMDLHEATYVVFDVETTGLSAMNNDLIQIAASKMFKGNIVEQFDEFIDPGHPLSAFTTELTGITDKHLQGAKPLVTVLKAFQDFCKDSILVAHNASFDVGFMNANYERHNLPKITQPVIDTLEFARNLYPEYKRHGLGPLTKRFQVSLDHHHMANYDAEATGRLLFIFLRDAREKHGIKNLLQLNTDLVAEDSYKKARIKHATIYVQNQVGLKNMFKLVSLSNIKYFEGVPRIPRTVLDAHREGLLLGTACSDGEVFDAVLTKGIDAAVDLAKYYDFIEIMPPAIYQPLVVRELIKDQAGIEQVIRDLIEVGKRAKKPVLATGNVHYLEPEEEIYREIIVRSLGQGAMINRTIGRGEGAQPAPLPKAHFRTTNEMLDEFAFLGKDLAYQVVVQNTQDFADRIEEVEVVKGDLYTPYIDKAEETVAELTYQKAFEIYGNPLPDIIDLRIEKELTSILGNGFAVIYLASQMLVNRSNERGYLVGSRGSVGSSFVATMIGITEVNPMPPHYVCPSCQHSEFITDGSVGSGYDLPNKPCPKCGTPYQKDGQDIPFETFLGFDGDKVPDIDLNFSGDDQPSAHLDVRDIFGDEYAFRAGTVGTVAEKTAYGFVKGYERDYGKFYRDAEVDRLAAGAAGVKRTTGQHPGGIVVIPNYMDVYDFTPVQYPADDVTASWQTTHFNFHDIDENVLKLDILGHDDPTMIRKLQDLSGIDPITIPADDPGVMALFSGTEILGVTPEQIGTPTGMLGIPEFGTNFVRGMVNETHPTTFAELLQLSGLSHGTDVWLGNAQDLIKEGIATLKTVIGCRDDIMVYLMHAGLEPKMAFTIMERVRKGLWLKISEEERNGYIDAMRENNVPDWYIESCGKIKYMFPKAHAAAYVLMALRVAYFKVHHPIMYYCAYFSIRAKAFELKTMSGGLDAVKARMEDITIKRKNNEATNVENDLFTTLEIVNEMLERGFKFGKLDLYKSDAIEFQIKGDTLIPPFIALEGLGENVAKQIVKARQEGEFLSKMELRKRGGASSTLVEKMDEMGILGNMPEDNQLSLFDDFF.

Positions 427–583 (YVVFDVETTG…YDAEATGRLL (157 aa)) constitute an Exonuclease domain.

Belongs to the DNA polymerase type-C family. PolC subfamily.

It localises to the cytoplasm. The enzyme catalyses DNA(n) + a 2'-deoxyribonucleoside 5'-triphosphate = DNA(n+1) + diphosphate. Required for replicative DNA synthesis. This DNA polymerase also exhibits 3' to 5' exonuclease activity. The protein is DNA polymerase III PolC-type of Streptococcus pyogenes serotype M18 (strain MGAS8232).